A 217-amino-acid chain; its full sequence is Pyridoxine/pyridoxamine 5'-phosphate oxidase (217 aa).

Residues Arg13–Tyr16 and Lys71 contribute to the substrate site. FMN-binding positions include Arg66–Lys71, Tyr81–Thr82, Lys88, and Gln110. 3 residues coordinate substrate: Tyr128, Arg132, and Ser136. Residues Gln145 to Ser146 and Trp190 contribute to the FMN site. Residue Arg196–His198 participates in substrate binding. Arg200 is an FMN binding site.

This sequence belongs to the pyridoxamine 5'-phosphate oxidase family. Homodimer. It depends on FMN as a cofactor.

It catalyses the reaction pyridoxamine 5'-phosphate + O2 + H2O = pyridoxal 5'-phosphate + H2O2 + NH4(+). The catalysed reaction is pyridoxine 5'-phosphate + O2 = pyridoxal 5'-phosphate + H2O2. It participates in cofactor metabolism; pyridoxal 5'-phosphate salvage; pyridoxal 5'-phosphate from pyridoxamine 5'-phosphate: step 1/1. Its pathway is cofactor metabolism; pyridoxal 5'-phosphate salvage; pyridoxal 5'-phosphate from pyridoxine 5'-phosphate: step 1/1. Its function is as follows. Catalyzes the oxidation of either pyridoxine 5'-phosphate (PNP) or pyridoxamine 5'-phosphate (PMP) into pyridoxal 5'-phosphate (PLP). This Edwardsiella ictaluri (strain 93-146) protein is Pyridoxine/pyridoxamine 5'-phosphate oxidase.